A 471-amino-acid polypeptide reads, in one-letter code: Collagenase 3 (471 aa).

Residues 1–19 (MHPGVLAAFLFLSWTHCRA) form the signal peptide. Residues 20–103 (LPLPSGGDED…PRCGVPDVGE (84 aa)) constitute a propeptide, activation peptide. The Cysteine switch signature appears at 94–101 (PRCGVPDV). C96 provides a ligand contact to Zn(2+). N117 is a glycosylation site (N-linked (GlcNAc...) asparagine). Residue D128 participates in Ca(2+) binding. N152 is a glycosylation site (N-linked (GlcNAc...) asparagine). Ca(2+) is bound at residue D162. Residues H172 and D174 each coordinate Zn(2+). The interval 176-246 (YPFDGPSGLL…GALMFPIYTY (71 aa)) is interaction with TIMP2. Ca(2+) is bound by residues D179, G180, S182, and L184. Position 187 (H187) interacts with Zn(2+). Ca(2+) contacts are provided by N194, G196, and D198. H200 provides a ligand contact to Zn(2+). Ca(2+)-binding residues include D202, D203, and E205. H222 lines the Zn(2+) pocket. E223 is an active-site residue. The Zn(2+) site is built by H226, H232, and M240. A disordered region spans residues 263–284 (QSLYGPGDEDPNPKHPKTPDKC). The tract at residues 268–471 (PGDEDPNPKH…VMPANSILWC (204 aa)) is interaction with collagen. Positions 273-284 (PNPKHPKTPDKC) are enriched in basic and acidic residues. 4 Hemopexin repeats span residues 281–330 (PDKC…WPEL), 331–377 (PNRI…GLPK), 379–427 (VKKI…FPGI), and 428–471 (GDKV…ILWC). A disulfide bridge links C284 with C471. Residues D291, I293, D335, and A337 each contribute to the Ca(2+) site. Y366 carries the phosphotyrosine; by PKDCC modification. Positions 383, 385, 432, and 434 each coordinate Ca(2+).

The protein belongs to the peptidase M10A family. Monomer. Interacts with TIMP1, TIMP2 and TIMP3. Binds (via the C-terminal region) to collagen. Requires Ca(2+) as cofactor. Zn(2+) serves as cofactor. Post-translationally, the proenzyme is activated by removal of the propeptide; this cleavage can be effected by other matrix metalloproteinases, such as MMP2, MMP3 and MMP14 and may involve several cleavage steps. Cleavage can also be autocatalytic, after partial maturation by another protease or after treatment with 4-aminophenylmercuric acetate (APMA) (in vitro). N-glycosylated. In terms of processing, tyrosine phosphorylated by PKDCC/VLK. In terms of tissue distribution, detected in fetal cartilage and calvaria, in chondrocytes of hypertrophic cartilage in vertebrae and in the dorsal end of ribs undergoing ossification, as well as in osteoblasts and periosteal cells below the inner periosteal region of ossified ribs. Detected in chondrocytes from in joint cartilage that have been treated with TNF and IL1B, but not in untreated chondrocytes. Detected in T lymphocytes. Detected in breast carcinoma tissue.

It localises to the secreted. It is found in the extracellular space. Its subcellular location is the extracellular matrix. Inhibited by TIMP1, TIMP2 and TIMP3. Inhibited by acetohydroxamic acid and other zinc chelators. In terms of biological role, plays a role in the degradation of extracellular matrix proteins including fibrillar collagen, fibronectin, TNC and ACAN. Cleaves triple helical collagens, including type I, type II and type III collagen, but has the highest activity with soluble type II collagen. Can also degrade collagen type IV, type XIV and type X. May also function by activating or degrading key regulatory proteins, such as TGFB1 and CCN2. Plays a role in wound healing, tissue remodeling, cartilage degradation, bone development, bone mineralization and ossification. Required for normal embryonic bone development and ossification. Plays a role in the healing of bone fractures via endochondral ossification. Plays a role in wound healing, probably by a mechanism that involves proteolytic activation of TGFB1 and degradation of CCN2. Plays a role in keratinocyte migration during wound healing. May play a role in cell migration and in tumor cell invasion. The sequence is that of Collagenase 3 (MMP13) from Homo sapiens (Human).